The chain runs to 163 residues: Ribosome maturation factor RimP (163 aa).

Belongs to the RimP family.

It is found in the cytoplasm. In terms of biological role, required for maturation of 30S ribosomal subunits. The protein is Ribosome maturation factor RimP of Polynucleobacter asymbioticus (strain DSM 18221 / CIP 109841 / QLW-P1DMWA-1) (Polynucleobacter necessarius subsp. asymbioticus).